The chain runs to 789 residues: Protein translocase subunit SecA 2 (789 aa).

ATP is bound by residues Gln79, 97–101, and Asp487; that span reads GEGKT.

It belongs to the SecA family. In terms of assembly, monomer and homodimer. Part of the essential Sec protein translocation apparatus which comprises SecA, SecYEG and auxiliary proteins SecDF. Other proteins may also be involved.

It is found in the cell membrane. The protein localises to the cytoplasm. It carries out the reaction ATP + H2O + cellular proteinSide 1 = ADP + phosphate + cellular proteinSide 2.. In terms of biological role, part of the Sec protein translocase complex. Interacts with the SecYEG preprotein conducting channel. Has a central role in coupling the hydrolysis of ATP to the transfer of proteins into and across the cell membrane, serving as an ATP-driven molecular motor driving the stepwise translocation of polypeptide chains across the membrane. This Pediococcus pentosaceus (strain ATCC 25745 / CCUG 21536 / LMG 10740 / 183-1w) protein is Protein translocase subunit SecA 2.